The following is a 157-amino-acid chain: Cyclic pyranopterin monophosphate synthase (157 aa).

Substrate is bound by residues 74 to 76 (MCH) and 112 to 113 (ME). The active site involves Asp-127.

It belongs to the MoaC family. As to quaternary structure, homohexamer; trimer of dimers.

It catalyses the reaction (8S)-3',8-cyclo-7,8-dihydroguanosine 5'-triphosphate = cyclic pyranopterin phosphate + diphosphate. The protein operates within cofactor biosynthesis; molybdopterin biosynthesis. Catalyzes the conversion of (8S)-3',8-cyclo-7,8-dihydroguanosine 5'-triphosphate to cyclic pyranopterin monophosphate (cPMP). In Campylobacter jejuni subsp. jejuni serotype O:23/36 (strain 81-176), this protein is Cyclic pyranopterin monophosphate synthase.